We begin with the raw amino-acid sequence, 209 residues long: uncharacterized protein (209 aa).

6 consecutive 4Fe-4S ferredoxin-type domains span residues lysine 38–phenylalanine 67, lysine 63–phenylalanine 92, aspartate 90–proline 119, lysine 122–proline 151, isoleucine 145–glutamate 174, and leucine 179–serine 209. Positions 47, 50, 53, 57, 72, 75, 78, 82, 99, 102, 105, and 109 each coordinate [4Fe-4S] cluster. 8 residues coordinate [4Fe-4S] cluster: cysteine 154, cysteine 157, cysteine 160, cysteine 164, cysteine 188, cysteine 191, cysteine 194, and cysteine 198.

This is an uncharacterized protein from Methanocaldococcus jannaschii (strain ATCC 43067 / DSM 2661 / JAL-1 / JCM 10045 / NBRC 100440) (Methanococcus jannaschii).